Here is a 533-residue protein sequence, read N- to C-terminus: Lysophosphatidylcholine acyltransferase (533 aa).

Residues 1–79 (MTTSTIKPTG…VLTVLLLPIR (79 aa)) are Cytoplasmic-facing. Residues 80–100 (VVGCVLSLISAWMFACIGLYG) traverse the membrane as a helical; Signal-anchor for type II membrane protein segment. Residues 101 to 533 (MTLDDLKAKP…PKAVVTTAEN (433 aa)) are Lumenal-facing. The HXXXXD motif signature appears at 158-163 (HSSYVD). EF-hand domains follow at residues 402–437 (LKNT…CKLK), 439–474 (SDLL…AGGK), and 475–510 (LNEQ…QKSS).

This sequence belongs to the 1-acyl-sn-glycerol-3-phosphate acyltransferase family.

The protein localises to the endoplasmic reticulum membrane. It is found in the golgi apparatus membrane. The protein resides in the lipid droplet. The enzyme catalyses a 1-acyl-sn-glycero-3-phosphocholine + an acyl-CoA = a 1,2-diacyl-sn-glycero-3-phosphocholine + CoA. The protein operates within lipid metabolism; phospholipid metabolism. Acetyltransferase which mediates the conversion of 1-acyl-sn-glycero-3-phosphocholine (LPC) into phosphatidylcholine (PC). Has a calcium-independent activity. Displays a clear preference for saturated fatty acyl-CoAs, and 1-myristoyl or 1-palmitoyl LPC as acyl donors and acceptors, respectively. Involved in the regulation of lipid droplet number and size. The chain is Lysophosphatidylcholine acyltransferase from Drosophila melanogaster (Fruit fly).